The following is a 279-amino-acid chain: Probable endonuclease 4 (279 aa).

9 residues coordinate Zn(2+): His69, His109, Glu145, Asp179, His182, His216, Asp229, His231, and Glu261.

The protein belongs to the AP endonuclease 2 family. The cofactor is Zn(2+).

It catalyses the reaction Endonucleolytic cleavage to 5'-phosphooligonucleotide end-products.. Its function is as follows. Endonuclease IV plays a role in DNA repair. It cleaves phosphodiester bonds at apurinic or apyrimidinic (AP) sites, generating a 3'-hydroxyl group and a 5'-terminal sugar phosphate. The chain is Probable endonuclease 4 from Serratia proteamaculans (strain 568).